Consider the following 610-residue polypeptide: DNA replication regulator sld2 (610 aa).

A compositionally biased stretch (basic and acidic residues) spans 28 to 42; sequence WAQKNDGKKPSREAI. Disordered regions lie at residues 28–115, 127–261, and 338–610; these read WAQK…AVHE, SPAV…ERSV, and EQGG…RRRR. Composition is skewed to polar residues over residues 86–110 and 232–261; these read ETSL…SQHY and TKTS…ERSV. Composition is skewed to acidic residues over residues 373 to 386 and 414 to 428; these read VPEE…DEAA and FDDE…EEDL. The segment covering 442-464 has biased composition (basic residues); sequence VFKKKGQKRTTRKVNMRPTRTKR. Positions 470–480 are enriched in acidic residues; it reads AEEEDDGEEEH. Over residues 493–503 the composition is skewed to basic and acidic residues; it reads KNLDGDDHHTL. Acidic residues predominate over residues 514–527; the sequence is EFDDGSEGEDEEAE. A compositionally biased stretch (basic and acidic residues) spans 544-573; the sequence is SAKEKTKKDATTETKKKKGTKEGGDEEPAK.

This sequence belongs to the SLD2 family.

The protein resides in the cytoplasm. It localises to the nucleus. In terms of biological role, has a role in the initiation of DNA replication. Required at S-phase checkpoint. This Neurospora crassa (strain ATCC 24698 / 74-OR23-1A / CBS 708.71 / DSM 1257 / FGSC 987) protein is DNA replication regulator sld2 (drc-4).